Here is a 203-residue protein sequence, read N- to C-terminus: Proteasome subunit beta 1 (203 aa).

A propeptide spans 1–7 (removed in mature form; by autocatalysis); the sequence is MAEKLKG. Thr8 functions as the Nucleophile in the catalytic mechanism.

It belongs to the peptidase T1B family. In terms of assembly, the 20S proteasome core is composed of 14 alpha and 14 beta subunits that assemble into four stacked heptameric rings, resulting in a barrel-shaped structure. The two inner rings, each composed of seven catalytic beta subunits, are sandwiched by two outer rings, each composed of seven alpha subunits. The catalytic chamber with the active sites is on the inside of the barrel. Has a gated structure, the ends of the cylinder being occluded by the N-termini of the alpha-subunits. Is capped at one or both ends by the proteasome regulatory ATPase, PAN.

The protein resides in the cytoplasm. The catalysed reaction is Cleavage of peptide bonds with very broad specificity.. With respect to regulation, the formation of the proteasomal ATPase PAN-20S proteasome complex, via the docking of the C-termini of PAN into the intersubunit pockets in the alpha-rings, triggers opening of the gate for substrate entry. Interconversion between the open-gate and close-gate conformations leads to a dynamic regulation of the 20S proteasome proteolysis activity. Its function is as follows. Component of the proteasome core, a large protease complex with broad specificity involved in protein degradation. This chain is Proteasome subunit beta 1, found in Thermococcus onnurineus (strain NA1).